A 206-amino-acid polypeptide reads, in one-letter code: Putative precorrin-2 dehydrogenase (206 aa).

Residues 20-21 and 41-46 each bind NAD(+); these read SV and KEFDEE.

This sequence belongs to the precorrin-2 dehydrogenase / sirohydrochlorin ferrochelatase family. As to quaternary structure, homodimer.

It carries out the reaction precorrin-2 + NAD(+) = sirohydrochlorin + NADH + 2 H(+). The protein operates within porphyrin-containing compound metabolism; siroheme biosynthesis; sirohydrochlorin from precorrin-2: step 1/1. Functionally, involved in the archaeal biosynthesis of heme. Catalyzes the oxiation of precorrin-2 into sirohydroclorin. The protein is Putative precorrin-2 dehydrogenase of Methanocaldococcus jannaschii (strain ATCC 43067 / DSM 2661 / JAL-1 / JCM 10045 / NBRC 100440) (Methanococcus jannaschii).